Reading from the N-terminus, the 603-residue chain is ATP-dependent lipid A-core flippase (603 aa).

The next 4 membrane-spanning stretches (helical) occupy residues 20 to 40 (LGYV…FLIF), 79 to 99 (LVYA…LGSF), 170 to 190 (VFLF…MLAI), and 269 to 289 (PMLQ…VLWL). The ABC transmembrane type-1 domain maps to 31–324 (LLSIVGFLIF…LSEVSSTVQR (294 aa)). The ABC transporter domain maps to 356 to 592 (LEVRNLSFRY…NGHYARLHAM (237 aa)). Residue 390 to 397 (GRSGSGKS) coordinates ATP.

The protein belongs to the ABC transporter superfamily. Lipid exporter (TC 3.A.1.106) family. Homodimer.

The protein resides in the cell inner membrane. It catalyses the reaction ATP + H2O + lipid A-core oligosaccharideSide 1 = ADP + phosphate + lipid A-core oligosaccharideSide 2.. Functionally, involved in lipopolysaccharide (LPS) biosynthesis. Translocates lipid A-core from the inner to the outer leaflet of the inner membrane. Transmembrane domains (TMD) form a pore in the inner membrane and the ATP-binding domain (NBD) is responsible for energy generation. The chain is ATP-dependent lipid A-core flippase from Pseudomonas aeruginosa (strain ATCC 15692 / DSM 22644 / CIP 104116 / JCM 14847 / LMG 12228 / 1C / PRS 101 / PAO1).